A 204-amino-acid polypeptide reads, in one-letter code: N-(5'-phosphoribosyl)anthranilate isomerase (204 aa).

It belongs to the TrpF family.

The enzyme catalyses N-(5-phospho-beta-D-ribosyl)anthranilate = 1-(2-carboxyphenylamino)-1-deoxy-D-ribulose 5-phosphate. The protein operates within amino-acid biosynthesis; L-tryptophan biosynthesis; L-tryptophan from chorismate: step 3/5. The polypeptide is N-(5'-phosphoribosyl)anthranilate isomerase (Bacillus cereus (strain B4264)).